The following is a 500-amino-acid chain: Palmitoleoyl-protein carboxylesterase notum1a (500 aa).

An N-terminal signal peptide occupies residues 1 to 26 (MKRSLWVMQVLHWAVMLALVQCGALG). Asn-101 is a glycosylation site (N-linked (GlcNAc...) asparagine). Residues Ser-237, Asp-344, and His-393 each act as charge relay system in the active site.

The protein belongs to the pectinacetylesterase family. Notum subfamily.

Its subcellular location is the secreted. The enzyme catalyses [Wnt protein]-O-(9Z)-hexadecenoyl-L-serine + H2O = [Wnt protein]-L-serine + (9Z)-hexadecenoate + H(+). Its function is as follows. Carboxylesterase that acts as a key negative regulator of the Wnt signaling pathway. Acts by specifically mediating depalmitoleoylation of WNT proteins. Serine palmitoleoylation of WNT proteins is required for efficient binding to frizzled receptors. The chain is Palmitoleoyl-protein carboxylesterase notum1a from Danio rerio (Zebrafish).